The primary structure comprises 160 residues: Ureidoglycolate lyase (160 aa).

Belongs to the ureidoglycolate lyase family. As to quaternary structure, homodimer. Ni(2+) serves as cofactor.

It carries out the reaction (S)-ureidoglycolate = urea + glyoxylate. Its pathway is nitrogen metabolism; (S)-allantoin degradation. Its function is as follows. Catalyzes the catabolism of the allantoin degradation intermediate (S)-ureidoglycolate, generating urea and glyoxylate. Involved in the anaerobic utilization of allantoin as sole nitrogen source. Reinforces the induction of genes involved in the degradation of allantoin and glyoxylate by producing glyoxylate. This Escherichia coli O139:H28 (strain E24377A / ETEC) protein is Ureidoglycolate lyase.